The following is a 149-amino-acid chain: Transcriptional repressor NrdR (149 aa).

Residues 3 to 34 (CPFCSIQETKVIDSRLVADGHQVRRRRECTMC) fold into a zinc finger. One can recognise an ATP-cone domain in the interval 49–139 (PRVVKRDGSR…VYRSFEDIRE (91 aa)).

Belongs to the NrdR family. It depends on Zn(2+) as a cofactor.

Functionally, negatively regulates transcription of bacterial ribonucleotide reductase nrd genes and operons by binding to NrdR-boxes. In Pseudoalteromonas atlantica (strain T6c / ATCC BAA-1087), this protein is Transcriptional repressor NrdR.